Consider the following 340-residue polypeptide: Ribonucleoside-diphosphate reductase subunit beta (340 aa).

Fe cation contacts are provided by D88 and H122. Y126 is an active-site residue. A Fe cation-binding site is contributed by H216.

It belongs to the ribonucleoside diphosphate reductase small chain family. As to quaternary structure, tetramer of two alpha and two beta subunits. The cofactor is Fe cation.

The catalysed reaction is a 2'-deoxyribonucleoside 5'-diphosphate + [thioredoxin]-disulfide + H2O = a ribonucleoside 5'-diphosphate + [thioredoxin]-dithiol. Functionally, provides the precursors necessary for DNA synthesis. Catalyzes the biosynthesis of deoxyribonucleotides from the corresponding ribonucleotides. The polypeptide is Ribonucleoside-diphosphate reductase subunit beta (nrdF) (Mycoplasma genitalium (strain ATCC 33530 / DSM 19775 / NCTC 10195 / G37) (Mycoplasmoides genitalium)).